We begin with the raw amino-acid sequence, 165 residues long: MIVTEILGNVHDDAGAALVGDRHREQVHLEGSALVKRIQRLRTDHGNEYGLRLPAGSPDLRDGDILTVDDDDEGERGNAVIVRVLSTDVLVISARSLREMAFVAHSLGNRHLPAQFFDADGPFGRDAMVVQHDHTVEDFLRAHDVPHERQERVMDVPFRHAEHTH.

Belongs to the UreE family.

The protein localises to the cytoplasm. Involved in urease metallocenter assembly. Binds nickel. Probably functions as a nickel donor during metallocenter assembly. In Micrococcus luteus (strain ATCC 4698 / DSM 20030 / JCM 1464 / CCM 169 / CCUG 5858 / IAM 1056 / NBRC 3333 / NCIMB 9278 / NCTC 2665 / VKM Ac-2230) (Micrococcus lysodeikticus), this protein is Urease accessory protein UreE.